The primary structure comprises 842 residues: uncharacterized protein (842 aa).

Disordered stretches follow at residues 1-20 and 142-209; these read MLHFLFHSGSSSNRNSSPKE and NSSS…TSSS. Residues 35 to 422 form the uDENN FNIP1/2-type domain; it reads TKDVTFRLVL…TAKSFHKCIL (388 aa). Residues 183–209 are compositionally biased toward polar residues; it reads ANLSSSSKNMKDSTLSSQKARSNTSSS. Residues 430 to 772 form the cDENN FNIP1/2-type domain; the sequence is APLIKPSVFS…CYEIHEFPSE (343 aa). Serine 573 and serine 590 each carry phosphoserine. A dDENN FNIP1/2-type domain is found at 777–842; the sequence is YAPFLLKEHH…KEVLRVCSHC (66 aa).

It localises to the cytoplasm. This is an uncharacterized protein from Schizosaccharomyces pombe (strain 972 / ATCC 24843) (Fission yeast).